Here is a 475-residue protein sequence, read N- to C-terminus: NADH-quinone oxidoreductase subunit N (475 aa).

14 helical membrane passes run 5 to 25 (LALPEIVLALCGLAILVFGVV), 32 to 52 (FLSCSMLTIGAFVLTGFLVVM), 71 to 91 (FMKILSLAGGAFATMLTVGYA), 99 to 119 (FEFPVLLLFSTLGAMMMASSE), 121 to 141 (LMTLFIGLELSSLAIYILCAF), 155 to 175 (YFVLGSLASGLLLYGSSLVYG), 193 to 213 (STAVPMGLMFGIVFMLAGLTF), 232 to 252 (PTSVTAYMAGAPKFAAFALLL), 266 to 286 (WQILVEGVSMLSMLFGSLAAI), 294 to 314 (LMAYSSIGHMGYALMGLCAGT), 322 to 342 (LVYLTTYLLMNVGAFAVIIAM), 366 to 386 (ATAMAIFMFSMAGAPPLAGFF), 389 to 409 (MMVFYAAINAHLFGLAAIGVV), and 439 to 459 (LSLSFVSVGMGIATTGFLLVL).

Belongs to the complex I subunit 2 family. NDH-1 is composed of 14 different subunits. Subunits NuoA, H, J, K, L, M, N constitute the membrane sector of the complex.

It localises to the cell inner membrane. It carries out the reaction a quinone + NADH + 5 H(+)(in) = a quinol + NAD(+) + 4 H(+)(out). Functionally, NDH-1 shuttles electrons from NADH, via FMN and iron-sulfur (Fe-S) centers, to quinones in the respiratory chain. The immediate electron acceptor for the enzyme in this species is believed to be ubiquinone. Couples the redox reaction to proton translocation (for every two electrons transferred, four hydrogen ions are translocated across the cytoplasmic membrane), and thus conserves the redox energy in a proton gradient. In Gluconacetobacter diazotrophicus (strain ATCC 49037 / DSM 5601 / CCUG 37298 / CIP 103539 / LMG 7603 / PAl5), this protein is NADH-quinone oxidoreductase subunit N.